The primary structure comprises 764 residues: FHF complex subunit HOOK interacting protein 2A (764 aa).

The tract at residues 190-236 is disordered; that stretch reads SEDGPKGQDPGSGDVSQCQQPQELSGATGVEPTESEEEPPHQMDDLS. The segment covering 203–214 has biased composition (polar residues); the sequence is DVSQCQQPQELS.

The protein belongs to the FHIP family.

May be required for proper functioning of the nervous system. The sequence is that of FHF complex subunit HOOK interacting protein 2A from Mus musculus (Mouse).